The sequence spans 841 residues: DNA ligase (841 aa).

Residues 54–58 (DAEYD), 103–104 (SL), and Glu143 contribute to the NAD(+) site. The active-site N6-AMP-lysine intermediate is the Lys145. Residues Arg166, Glu203, Lys321, and Lys345 each contribute to the NAD(+) site. Cys471, Cys474, Cys489, and Cys495 together coordinate Zn(2+). Residues 554–575 (KTVAESDQMPSEGSSVGASGKH) are disordered. Over residues 561 to 570 (QMPSEGSSVG) the composition is skewed to polar residues. One can recognise a BRCT domain in the interval 764 to 841 (GINKAVAGKT…SEAELLTLLG (78 aa)).

The protein belongs to the NAD-dependent DNA ligase family. LigA subfamily. It depends on Mg(2+) as a cofactor. Mn(2+) is required as a cofactor.

The catalysed reaction is NAD(+) + (deoxyribonucleotide)n-3'-hydroxyl + 5'-phospho-(deoxyribonucleotide)m = (deoxyribonucleotide)n+m + AMP + beta-nicotinamide D-nucleotide.. Functionally, DNA ligase that catalyzes the formation of phosphodiester linkages between 5'-phosphoryl and 3'-hydroxyl groups in double-stranded DNA using NAD as a coenzyme and as the energy source for the reaction. It is essential for DNA replication and repair of damaged DNA. The protein is DNA ligase of Neisseria meningitidis serogroup C (strain 053442).